Consider the following 231-residue polypeptide: Large ribosomal subunit protein uL1 (231 aa).

It belongs to the universal ribosomal protein uL1 family. Part of the 50S ribosomal subunit.

Functionally, binds directly to 23S rRNA. The L1 stalk is quite mobile in the ribosome, and is involved in E site tRNA release. Protein L1 is also a translational repressor protein, it controls the translation of the L11 operon by binding to its mRNA. This is Large ribosomal subunit protein uL1 from Ruthia magnifica subsp. Calyptogena magnifica.